Here is a 197-residue protein sequence, read N- to C-terminus: Orotate phosphoribosyltransferase (197 aa).

5-phospho-alpha-D-ribose 1-diphosphate is bound by residues R87, K91, H93, and 112-120 (DDVATTGGS). Residues T116 and R144 each contribute to the orotate site.

It belongs to the purine/pyrimidine phosphoribosyltransferase family. PyrE subfamily. Homodimer. Requires Mg(2+) as cofactor.

The enzyme catalyses orotidine 5'-phosphate + diphosphate = orotate + 5-phospho-alpha-D-ribose 1-diphosphate. Its pathway is pyrimidine metabolism; UMP biosynthesis via de novo pathway; UMP from orotate: step 1/2. Its function is as follows. Catalyzes the transfer of a ribosyl phosphate group from 5-phosphoribose 1-diphosphate to orotate, leading to the formation of orotidine monophosphate (OMP). In Sulfolobus acidocaldarius (strain ATCC 33909 / DSM 639 / JCM 8929 / NBRC 15157 / NCIMB 11770), this protein is Orotate phosphoribosyltransferase.